We begin with the raw amino-acid sequence, 138 residues long: Large ribosomal subunit protein uL14 (138 aa).

The protein belongs to the universal ribosomal protein uL14 family. As to quaternary structure, part of the 50S ribosomal subunit. Forms a cluster with proteins L3 and L24e, part of which may contact the 16S rRNA in 2 intersubunit bridges.

In terms of biological role, binds to 23S rRNA. Forms part of two intersubunit bridges in the 70S ribosome. This is Large ribosomal subunit protein uL14 from Metallosphaera sedula (strain ATCC 51363 / DSM 5348 / JCM 9185 / NBRC 15509 / TH2).